We begin with the raw amino-acid sequence, 121 residues long: uncharacterized protein (121 aa).

The signal sequence occupies residues 1–31; sequence MILNNKGFIRILEATIAGIMVILVFSYLVMS.

The protein to B.burgdorferi BB0465 N-terminal region.

This is an uncharacterized protein from Methanocaldococcus jannaschii (strain ATCC 43067 / DSM 2661 / JAL-1 / JCM 10045 / NBRC 100440) (Methanococcus jannaschii).